The following is a 354-amino-acid chain: Neuronal growth regulator 1 (354 aa).

The N-terminal stretch at Met1–Ser37 is a signal peptide. Ig-like C2-type domains are found at residues Val38 to Thr134, Pro139 to Val221, and Pro225 to Asn313. An intrachain disulfide couples Cys60 to Cys118. N-linked (GlcNAc...) asparagine glycosylation is found at Asn73 and Asn155. Disulfide bonds link Cys160-Cys203 and Cys245-Cys297. Tyr187 carries the phosphotyrosine modification. 4 N-linked (GlcNAc...) asparagine glycosylation sites follow: Asn275, Asn286, Asn294, and Asn307. Gly324 carries the GPI-anchor amidated glycine lipid modification. Residues Ser325–Gln354 constitute a propeptide, removed in mature form.

The protein belongs to the immunoglobulin superfamily. IgLON family.

The protein resides in the cell membrane. Its function is as follows. May be involved in cell-adhesion. May function as a trans-neural growth-promoting factor in regenerative axon sprouting in the mammalian brain. This Homo sapiens (Human) protein is Neuronal growth regulator 1 (NEGR1).